Here is a 445-residue protein sequence, read N- to C-terminus: Argininosuccinate synthase (445 aa).

Residues 17-25 (AFSGGLDTS) and Ala-43 contribute to the ATP site. An L-citrulline-binding site is contributed by Tyr-99. ATP is bound by residues Gly-129 and Thr-131. 3 residues coordinate L-aspartate: Thr-131, Asn-135, and Asp-136. Residue Asn-135 coordinates L-citrulline. Asp-136 serves as a coordination point for ATP. L-citrulline-binding residues include Arg-139 and Ser-192. Position 194 (Asp-194) interacts with ATP. Positions 201, 203, and 280 each coordinate L-citrulline.

It belongs to the argininosuccinate synthase family. Type 2 subfamily. In terms of assembly, homotetramer.

Its subcellular location is the cytoplasm. It catalyses the reaction L-citrulline + L-aspartate + ATP = 2-(N(omega)-L-arginino)succinate + AMP + diphosphate + H(+). It functions in the pathway amino-acid biosynthesis; L-arginine biosynthesis; L-arginine from L-ornithine and carbamoyl phosphate: step 2/3. This chain is Argininosuccinate synthase (argG), found in Burkholderia multivorans (strain ATCC 17616 / 249).